The following is a 307-amino-acid chain: GMP synthase [glutamine-hydrolyzing] subunit B (307 aa).

The GMPS ATP-PPase domain occupies 1–184 (MWENFIEEKV…LGLPEKIYNR (184 aa)). An ATP-binding site is contributed by 27–33 (SGGVDSS).

As to quaternary structure, heterodimer composed of a glutamine amidotransferase subunit (A) and a GMP-binding subunit (B).

The enzyme catalyses XMP + L-glutamine + ATP + H2O = GMP + L-glutamate + AMP + diphosphate + 2 H(+). Its pathway is purine metabolism; GMP biosynthesis; GMP from XMP (L-Gln route): step 1/1. In terms of biological role, catalyzes the synthesis of GMP from XMP. This Thermococcus kodakarensis (strain ATCC BAA-918 / JCM 12380 / KOD1) (Pyrococcus kodakaraensis (strain KOD1)) protein is GMP synthase [glutamine-hydrolyzing] subunit B.